Reading from the N-terminus, the 326-residue chain is GTP 3',8-cyclase (326 aa).

The region spanning 6–220 (SFGRRINYLR…DRISASYELE (215 aa)) is the Radical SAM core domain. A GTP-binding site is contributed by arginine 15. Positions 22 and 26 each coordinate [4Fe-4S] cluster. S-adenosyl-L-methionine is bound at residue tyrosine 28. [4Fe-4S] cluster is bound at residue cysteine 29. Arginine 65 contacts GTP. Residue glycine 69 coordinates S-adenosyl-L-methionine. Threonine 96 serves as a coordination point for GTP. Position 120 (serine 120) interacts with S-adenosyl-L-methionine. Lysine 157 lines the GTP pocket. S-adenosyl-L-methionine is bound at residue methionine 191. The [4Fe-4S] cluster site is built by cysteine 254 and cysteine 257. Residue 259-261 (RVR) participates in GTP binding. A [4Fe-4S] cluster-binding site is contributed by cysteine 271.

Belongs to the radical SAM superfamily. MoaA family. Monomer and homodimer. Requires [4Fe-4S] cluster as cofactor.

The catalysed reaction is GTP + AH2 + S-adenosyl-L-methionine = (8S)-3',8-cyclo-7,8-dihydroguanosine 5'-triphosphate + 5'-deoxyadenosine + L-methionine + A + H(+). It participates in cofactor biosynthesis; molybdopterin biosynthesis. Its function is as follows. Catalyzes the cyclization of GTP to (8S)-3',8-cyclo-7,8-dihydroguanosine 5'-triphosphate. The polypeptide is GTP 3',8-cyclase (Geobacter sulfurreducens (strain ATCC 51573 / DSM 12127 / PCA)).